A 220-amino-acid polypeptide reads, in one-letter code: Polyadenylate-binding protein 2 (220 aa).

Residues 1–24 (MEEEEHEVYGGEIPDVGEMDGDME) form a disordered region. A coiled-coil region spans residues 34–74 (AADDDAVKELDEMKKRLKEMEDEAAALREMQAKVEKEMGAQ). The segment at 78–219 (SIAANQAGKE…FRRPMRYMPY (142 aa)) is necessary for homooligomerization. One can recognise an RRM domain in the interval 92-168 (RSVFVGNVDY…RQLKVLQKRT (77 aa)). Positions 165-172 (QKRTNVPG) match the Nuclear localization signal motif.

As to quaternary structure, monomer and homooligomer. Binds RNA as a monomer and oligomerizes when bound to poly(A). Forms a complex with cleavage and polyadenylation specificity factor (CPSF) subunits PAPS2, FIPS5, PABN3 and PABN1. Interacts with CSP3.

It is found in the nucleus speckle. The protein resides in the cytoplasm. In terms of biological role, involved in the 3'-end formation of mRNA precursors (pre-mRNA) by the addition of a poly(A) tail of 200-250 nt to the upstream cleavage product. Stimulates poly(A) polymerase (PAPOLA) conferring processivity on the poly(A) tail elongation reaction and also controls the poly(A) tail length. Increases the affinity of poly(A) polymerase for RNA. Binds to poly(A) and to poly(G) with high affinity. May protect the poly(A) tail from degradation. This Arabidopsis thaliana (Mouse-ear cress) protein is Polyadenylate-binding protein 2.